The sequence spans 728 residues: Putative auxin response factor 20 (728 aa).

A DNA-binding region (TF-B3 1) is located at residues 119–233; the sequence is FFEKQLSPAD…ELLVGVRRAP (115 aa). Low complexity-rich tracts occupy residues 665-689 and 700-712; these read PQGS…TTSA and ASSS…IIPS. The tract at residues 665-728 is disordered; the sequence is PQGSDEEAAA…IVNPRDGSQG (64 aa).

It belongs to the ARF family. Homo and heterodimers.

The protein localises to the nucleus. Functionally, auxin response factors (ARFs) are transcriptional factors that bind specifically to the DNA sequence 5'-TGTCTC-3' found in the auxin-responsive promoter elements (AuxREs). This chain is Putative auxin response factor 20 (ARF20), found in Oryza sativa subsp. japonica (Rice).